An 87-amino-acid chain; its full sequence is Small ribosomal subunit protein bS20 (87 aa).

The disordered stretch occupies residues 1–25; it reads MANSAQARKRARQNISHRNRNMSLR. The segment covering 7 to 20 has biased composition (basic residues); that stretch reads ARKRARQNISHRNR.

This sequence belongs to the bacterial ribosomal protein bS20 family.

Functionally, binds directly to 16S ribosomal RNA. The sequence is that of Small ribosomal subunit protein bS20 from Nitrosospira multiformis (strain ATCC 25196 / NCIMB 11849 / C 71).